Here is a 210-residue protein sequence, read N- to C-terminus: Keratin-associated protein 4-9 (210 aa).

28 repeat units span residues 24–28, 29–33, 34–38, 39–43, 44–48, 49–53, 54–58, 59–63, 69–73, 74–78, 84–88, 89–93, 94–98, 99–103, 104–108, 109–113, 114–118, 119–123, 124–128, 129–133, 134–138, 139–143, 144–148, 149–153, 159–163, 164–168, 169–173, and 174–178. Residues 24 to 178 form a 29 X 5 AA repeats of C-C-[RQVHIEK]-[SPTR]-[VSTQCRNP] region; the sequence is CCRPSCCETT…CCRPCCCVRP (155 aa).

The protein belongs to the KRTAP type 4 family. As to quaternary structure, interacts with hair keratins. As to expression, expressed in the hair follicles.

Functionally, in the hair cortex, hair keratin intermediate filaments are embedded in an interfilamentous matrix, consisting of hair keratin-associated proteins (KRTAP), which are essential for the formation of a rigid and resistant hair shaft through their extensive disulfide bond cross-linking with abundant cysteine residues of hair keratins. The matrix proteins include the high-sulfur and high-glycine-tyrosine keratins. This is Keratin-associated protein 4-9 (KRTAP4-9) from Homo sapiens (Human).